A 273-amino-acid polypeptide reads, in one-letter code: Thiazole synthase (273 aa).

K111 functions as the Schiff-base intermediate with DXP in the catalytic mechanism. 1-deoxy-D-xylulose 5-phosphate is bound by residues G172, 198–199 (AG), and 220–221 (NS). Residues 251 to 273 (RLPRRGQASASSPTTGLISGKDK) are disordered. Residues 258-267 (ASASSPTTGL) are compositionally biased toward polar residues.

This sequence belongs to the ThiG family. Homotetramer. Forms heterodimers with either ThiH or ThiS.

The protein resides in the cytoplasm. It catalyses the reaction [ThiS sulfur-carrier protein]-C-terminal-Gly-aminoethanethioate + 2-iminoacetate + 1-deoxy-D-xylulose 5-phosphate = [ThiS sulfur-carrier protein]-C-terminal Gly-Gly + 2-[(2R,5Z)-2-carboxy-4-methylthiazol-5(2H)-ylidene]ethyl phosphate + 2 H2O + H(+). It participates in cofactor biosynthesis; thiamine diphosphate biosynthesis. Catalyzes the rearrangement of 1-deoxy-D-xylulose 5-phosphate (DXP) to produce the thiazole phosphate moiety of thiamine. Sulfur is provided by the thiocarboxylate moiety of the carrier protein ThiS. In vitro, sulfur can be provided by H(2)S. The polypeptide is Thiazole synthase (Synechococcus sp. (strain CC9902)).